We begin with the raw amino-acid sequence, 444 residues long: C4-dicarboxylate transport protein 1 (444 aa).

The next 9 membrane-spanning stretches (helical) occupy residues 9–29 (SIFLQVVIGLVIGVLCGVGIP), 42–62 (FIKLIKMLIALIVFCVVVNGI), 78–98 (SVIYFEILTTIALVLGLVVAY), 152–172 (ILQVLLFSVLFGSALNLVGEQ), 190–210 (IMGMIVRLAPLGVFGAVAFTT), 221–241 (LGALVLVFYATCLVFVMAVLG), 307–327 (FSIYLTLAVVFIAHVTGTPLA), 354–374 (VILAATLTAVPAIPVAGLVLV), and 380–400 (FMGIGRALTNLIGNCVATVTI).

Belongs to the dicarboxylate/amino acid:cation symporter (DAACS) (TC 2.A.23) family.

It is found in the cell inner membrane. Responsible for the transport of dicarboxylates such as succinate, fumarate, and malate from the periplasm across the membrane. The sequence is that of C4-dicarboxylate transport protein 1 from Pseudomonas paraeruginosa (strain DSM 24068 / PA7) (Pseudomonas aeruginosa (strain PA7)).